Here is a 704-residue protein sequence, read N- to C-terminus: Translin-associated factor X-interacting protein 1 (704 aa).

Residues 1-37 are disordered; it reads MANLQERKSFSKPRISIQASGGTPEAKGIEKRKLSQK. Coiled coils occupy residues 190-230 and 304-342; these read EISV…AEEY and RRDLEMQEKTNMELQEQLESLKADYEEVQKEHELLLQLH.

Interacts with TSNAX. Specifically expressed in testes. Predominantly detected in the post-meiotic stages of germ cells.

Its subcellular location is the cytoplasm. The protein localises to the perinuclear region. Its function is as follows. Possible role in spermatogenesis. In Mus musculus (Mouse), this protein is Translin-associated factor X-interacting protein 1.